Consider the following 177-residue polypeptide: Meiotic chromosome segregation protein C17A2.07c (177 aa).

Positions 71 to 90 are disordered; it reads EDDSINKPTEEADEAPRTQL. Basic and acidic residues predominate over residues 74–86; that stretch reads SINKPTEEADEAP.

The protein localises to the nucleus. Functionally, involved in meiotic chromosome segregation. The protein is Meiotic chromosome segregation protein C17A2.07c of Schizosaccharomyces pombe (strain 972 / ATCC 24843) (Fission yeast).